The chain runs to 131 residues: Holo-[acyl-carrier-protein] synthase (131 aa).

2 residues coordinate Mg(2+): Asp8 and Glu59.

Belongs to the P-Pant transferase superfamily. AcpS family. Requires Mg(2+) as cofactor.

It localises to the cytoplasm. The enzyme catalyses apo-[ACP] + CoA = holo-[ACP] + adenosine 3',5'-bisphosphate + H(+). Functionally, transfers the 4'-phosphopantetheine moiety from coenzyme A to a Ser of acyl-carrier-protein. This Rickettsia rickettsii (strain Sheila Smith) protein is Holo-[acyl-carrier-protein] synthase.